We begin with the raw amino-acid sequence, 355 residues long: Anthocyanin synthase (355 aa).

Residues tyrosine 145 and lysine 216 each coordinate substrate. The region spanning 211 to 310 (LLLQMKINYY…RISWAVFCEP (100 aa)) is the Fe2OG dioxygenase domain. Position 218–220 (218–220 (NYY)) interacts with 2-oxoglutarate. Histidine 235 is a binding site for Fe cation. Threonine 236 provides a ligand contact to substrate. Residues aspartate 237 and histidine 291 each coordinate Fe cation. 2-oxoglutarate is bound by residues arginine 301 and 301–303 (RIS). Residues glutamate 309 and lysine 344 each contribute to the substrate site.

Belongs to the iron/ascorbate-dependent oxidoreductase family. L-ascorbate is required as a cofactor. It depends on Fe(2+) as a cofactor. Expressed in stems and leaves. Expressed at low levels in ovaries.

It carries out the reaction a (2R,3S,4S)-leucoanthocyanidin + 2-oxoglutarate + O2 = a 4-H-anthocyanidin with a 3-hydroxy group + succinate + CO2 + 2 H2O. It participates in pigment biosynthesis; anthocyanin biosynthesis. Functionally, involved in anthocyanin biosynthesis by catalyzing the oxidation of leucoanthocyanidins into anthocyanidins. Required for the accumulation of anthocyanin in red-fleshed kiwifruit varieties. The polypeptide is Anthocyanin synthase (Actinidia chinensis var. chinensis (Chinese soft-hair kiwi)).